We begin with the raw amino-acid sequence, 174 residues long: Regenerating islet-derived protein 3-gamma (174 aa).

Residues 1–26 (MLPRITITIMSWMLLSCLMLLSQVQG) form the signal peptide. A propeptide spanning residues 27-37 (EVAKKDAPSSR) is cleaved from the precursor. 3 cysteine pairs are disulfide-bonded: cysteine 40–cysteine 51, cysteine 68–cysteine 170, and cysteine 145–cysteine 162. Residues 47–171 (YGSYCYALFS…CNLELPYVCK (125 aa)) form the C-type lectin domain. The tract at residues 103 to 118 (WIGLHDPTLGYEPNRG) is sufficient to activate EXTL3. Residue histidine 107 participates in Zn(2+) binding. Residues 114–116 (EPN) carry the EPN motif. The Zn(2+) site is built by glutamate 121 and histidine 144.

As to quaternary structure, forms a hexameric membrane-permeabilizing oligomeric pore on membrane phospholipids. The hexamer is formed by three dimers related by helical symmetry. Forms filaments, filamentation traps pore complexes and limits damage to host cells. Interacts with EXTL3. Post-translationally, proteolytic processing by trypsin removes an inhibitory N-terminal propeptide and is essential for peptidoglycan binding and antibacterial activity. Predominantly expressed in the small intestine, including Paneth cells (at protein level). Hardly detectable in the colon (at protein level). Highly expressed in the lung epithelium during methicillin-resistant S.aureus infection and allergic airway inflammation (at protein level). Skin injury increases its epidermal expression. Also expressed in the pancreas. Expressed by nocireceptors.

The protein localises to the secreted. It is found in the cytoplasm. With respect to regulation, lipopolysaccharide inhibits pore-forming activity, explaining why is bactericidal for Gram-positive but not Gram-negative bacteria. Functionally, bactericidal C-type lectin which acts exclusively against Gram-positive bacteria and mediates bacterial killing by binding to surface-exposed carbohydrate moieties of peptidoglycan. Restricts bacterial colonization of the intestinal epithelial surface and consequently limits activation of adaptive immune responses by the microbiota. Acts as a hormone in response to different stimuli like anti-inflammatory signals, such as IL17A, or gut microbiome. Is secreted by different cell types to activate its receptor EXTL3 and induce cell specific signaling pathways. Induced by IL17A in keratinocytes, regulates keratinocyte proliferation and differentiation after skin injury. In parallel, inhibits skin inflammation through the inhibition of inflammatory cytokines such as IL6 and TNF. Induced by IL22 in lung epithelial cells, inhibits cytokine production and regulates allergic airway inflammation. Induced in small intestine by inulin-enriched diet and Lactobacillus gasseri enriched microbiome, plays a role in the improvement of gut barrier function, the regulation of energy balance and glucose levels. Modulates microbiota composition in duodenal contents. Produced by nociceptor in response to endotoxins, prevents endotoxic death by targeting kynurenine pathway in microglia. Its function is as follows. Has bacteriostatic activity. In terms of biological role, has bactericidal activity against L.monocytogenes and methicillin-resistant S.aureus. This chain is Regenerating islet-derived protein 3-gamma, found in Mus musculus (Mouse).